The sequence spans 368 residues: tRNA-specific 2-thiouridylase MnmA (368 aa).

ATP-binding positions include 11 to 18 (GMSGGVDS) and Met37. The segment at 97–99 (NPD) is interaction with target base in tRNA. The Nucleophile role is filled by Cys102. The cysteines at positions 102 and 199 are disulfide-linked. Gly127 contacts ATP. The segment at 149 to 151 (KDQ) is interaction with tRNA. Catalysis depends on Cys199, which acts as the Cysteine persulfide intermediate. Residues 311-312 (RY) are interaction with tRNA.

It belongs to the MnmA/TRMU family. In terms of assembly, interacts with TusE.

It is found in the cytoplasm. It carries out the reaction S-sulfanyl-L-cysteinyl-[protein] + uridine(34) in tRNA + AH2 + ATP = 2-thiouridine(34) in tRNA + L-cysteinyl-[protein] + A + AMP + diphosphate + H(+). Its function is as follows. Catalyzes the 2-thiolation of uridine at the wobble position (U34) of tRNA(Lys), tRNA(Glu) and tRNA(Gln), leading to the formation of s(2)U34, the first step of tRNA-mnm(5)s(2)U34 synthesis. Sulfur is provided by IscS, via a sulfur-relay system. Binds ATP and its substrate tRNAs. This chain is tRNA-specific 2-thiouridylase MnmA, found in Shigella dysenteriae serotype 1 (strain Sd197).